The sequence spans 757 residues: MDVNPTLLFLKVPAQNAISTTFPYTGDPPYSHGTGTGYTMDTVNRTHQYSEKGKWTTNTETGAPQLNPIDGPLPEDNEPSGYAQTDCVLEAMAFLEESHPGIFENSCLETMEVVQQTRVDKLTQGRQTYDWTLNRNQPAATALANTIEVFRSNGLTANESGRLIDFLKDVMESMDKEEMEITTHFQRKRRVRDNMTKKMVTQRTIGKKKQRVNKRSYLIRALTLNTMTKDAERGKLKRRAIATPGMQIRGFVYFVETLARSICEKLEQSGLPVGGNEKKAKLANVVRKMMTNSQDTELSFTITGDNTKWNENQNPRMFLAMITYITKNQPEWFRNILSIAPIMFSNKMARLGKGYMFESKRMKLRTQIPAEMLASIDLKYFNESTRKKIEKIRPLLIDGTASLSPGMMMGMFNMLSTVLGVSILNLGQKKYTKTTYWWDGLQSSDDFALIVNAPNHEGIQAGVDRFYRTCKLVGINMSKKKSYINRTGTFEFTSFFYRYGFVANFSMELPSFGVSGINESADMSIGVTVIKNNMINNDLGPATAQMALQLFIKDYRYTYRCHRGDTQIQTRRSFELKKLWEQTRSKAGLLVSDGGPNLYNIRNLHIPEVCLKWELMDEDYQGRLCNPLNPFVSHKEIESVNNAVVMPAHGPAKSMEYDAVATTHSWIPKRNRSILNTSQRGILEDEQMYQKCCNLFEKFFPSSSYRRPVGISSMVEAMVSRARIDARVDFESGRIKKEEFAEIMKICSTIEELRRQK.

Residues 50 to 82 form a disordered region; that stretch reads SEKGKWTTNTETGAPQLNPIDGPLPEDNEPSGY. A compositionally biased stretch (polar residues) spans 55 to 64; the sequence is WTTNTETGAP. 2 short sequence motifs (nuclear localization signal) span residues 187 to 195 and 203 to 216; these read RKRRVRDNM and RTIG…NKRS. The promoter-binding site stretch occupies residues 249-256; the sequence is RGFVYFVE. The RdRp catalytic domain maps to 286–483; it reads VRKMMTNSQD…GINMSKKKSY (198 aa).

It belongs to the influenza viruses polymerase PB1 family. As to quaternary structure, influenza RNA polymerase is composed of three subunits: PB1, PB2 and PA. Interacts (via N-terminus) with PA (via C-terminus). Interacts (via C-terminus) with PB2 (via N-terminus); this interaction is essential for transcription initiation. Phosphorylated by host PRKCA.

The protein localises to the host nucleus. It localises to the host cytoplasm. The enzyme catalyses RNA(n) + a ribonucleoside 5'-triphosphate = RNA(n+1) + diphosphate. RNA-dependent RNA polymerase which is responsible for replication and transcription of virus RNA segments. The transcription of viral mRNAs occurs by a unique mechanism called cap-snatching. 5' methylated caps of cellular mRNAs are cleaved after 10-13 nucleotides by PA. In turn, these short capped RNAs are used as primers by PB1 for transcription of viral mRNAs. During virus replication, PB1 initiates RNA synthesis and copy vRNA into complementary RNA (cRNA) which in turn serves as a template for the production of more vRNAs. The sequence is that of RNA-directed RNA polymerase catalytic subunit from Influenza A virus (strain A/Memphis/101/1972 H3N2).